The following is a 227-amino-acid chain: UPF0758 protein Pcar_0065 (227 aa).

One can recognise an MPN domain in the interval 105 to 227; that stretch reads RYTSPQAVFA…YVSLADRGVL (123 aa). Zn(2+) contacts are provided by histidine 176, histidine 178, and aspartate 189. Positions 176 to 189 match the JAMM motif motif; that stretch reads HNHPSGDPSPSRED.

Belongs to the UPF0758 family.

This is UPF0758 protein Pcar_0065 from Syntrophotalea carbinolica (strain DSM 2380 / NBRC 103641 / GraBd1) (Pelobacter carbinolicus).